The chain runs to 239 residues: Putative HTH-type transcriptional regulator YkgA (239 aa).

Positions 19 to 117 (QQLLEWIECN…GCSPREYRHR (99 aa)) constitute an HTH araC/xylS-type domain. DNA-binding regions (H-T-H motif) lie at residues 36-57 (EDIA…RNFM) and 84-107 (MLDI…KKLF).

This chain is Putative HTH-type transcriptional regulator YkgA (ykgA), found in Escherichia coli (strain K12).